The primary structure comprises 142 residues: MAP3K7 C-terminal-like protein (142 aa).

In terms of tissue distribution, ubiquitous.

This chain is MAP3K7 C-terminal-like protein (Map3k7cl), found in Mus musculus (Mouse).